A 183-amino-acid chain; its full sequence is ATP synthase subunit delta (183 aa).

This sequence belongs to the ATPase delta chain family. As to quaternary structure, F-type ATPases have 2 components, F(1) - the catalytic core - and F(0) - the membrane proton channel. F(1) has five subunits: alpha(3), beta(3), gamma(1), delta(1), epsilon(1). F(0) has three main subunits: a(1), b(2) and c(10-14). The alpha and beta chains form an alternating ring which encloses part of the gamma chain. F(1) is attached to F(0) by a central stalk formed by the gamma and epsilon chains, while a peripheral stalk is formed by the delta and b chains.

Its subcellular location is the cell inner membrane. In terms of biological role, f(1)F(0) ATP synthase produces ATP from ADP in the presence of a proton or sodium gradient. F-type ATPases consist of two structural domains, F(1) containing the extramembraneous catalytic core and F(0) containing the membrane proton channel, linked together by a central stalk and a peripheral stalk. During catalysis, ATP synthesis in the catalytic domain of F(1) is coupled via a rotary mechanism of the central stalk subunits to proton translocation. This protein is part of the stalk that links CF(0) to CF(1). It either transmits conformational changes from CF(0) to CF(1) or is implicated in proton conduction. The polypeptide is ATP synthase subunit delta (Solidesulfovibrio magneticus (strain ATCC 700980 / DSM 13731 / RS-1) (Desulfovibrio magneticus)).